Reading from the N-terminus, the 365-residue chain is Homeobox protein knotted-1-like 7 (365 aa).

A compositionally biased stretch (basic and acidic residues) spans 1–11 (MEELEGHRGEG). The tract at residues 1–20 (MEELEGHRGEGRLPPPPPLL) is disordered. One can recognise an ELK domain in the interval 227 to 247 (ALKRHLLRKYSGYLGGLRKEL). The segment at residues 248–311 (SKKRKKGKLP…NQRKRHWKPT (64 aa)) is a DNA-binding region (homeobox; TALE-type).

This sequence belongs to the TALE/KNOX homeobox family.

The protein resides in the nucleus. Its function is as follows. Probable transcription factor that may be involved in shoot formation during embryogenesis. In Oryza sativa subsp. japonica (Rice), this protein is Homeobox protein knotted-1-like 7 (OSH3).